Here is a 416-residue protein sequence, read N- to C-terminus: LysM domain-containing GPI-anchored protein 1 (416 aa).

The N-terminal stretch at 1–27 is a signal peptide; the sequence is MKIPEKPIFLIFVSLILASSLTFTATA. Cystine bridges form between C34-C100, C40-C163, C98-C161, and C100-C163. N-linked (GlcNAc...) asparagine glycosylation is present at N37. Residues 110-157 form the LysM 1 domain; the sequence is THYKTRPSDNLGSIADSVYGGLVSAEQIQEANSVNDPSLLDVGTSLVI. N-linked (GlcNAc...) asparagine glycosylation occurs at N165. Residues 176-219 form the LysM 2 domain; it reads LSYVVKEIDTLVGIARRYSTTITDLMNVNAMGAPDVSSGDILAV. 2 disulfides stabilise this stretch: C224–C256 and C251–C279. N241 carries N-linked (GlcNAc...) asparagine glycosylation. 3 N-linked (GlcNAc...) asparagine glycosylation sites follow: N288, N299, and N310. The disordered stretch occupies residues 356 to 376; the sequence is DGPGSIASSPRSSMLPGGGIL. A391 carries GPI-anchor amidated alanine lipidation. Positions 392-416 are cleaved as a propeptide — removed in mature form; sequence SASSVSYFFITFLISIASFSLALSS.

In terms of assembly, interacts with peptidoglycans.

It is found in the cell membrane. The protein localises to the secreted. Functionally, required as a cell surface receptor for peptidoglycan (PGN) elicitor signaling leading to innate immunity. Plays an essential role in detecting PGNs and restricting bacterial growth (of Pseudomonas syringae pv. tomato DC3000 for example). The protein is LysM domain-containing GPI-anchored protein 1 (LYM1) of Arabidopsis thaliana (Mouse-ear cress).